Consider the following 533-residue polypeptide: Na(+)/H(+) antiporter NhaB (533 aa).

A run of 10 helical transmembrane segments spans residues 28 to 50 (FLIINPLLFFYVDPFVAGWVLVL), 67 to 87 (PGGLLAIEAVAIGMTSASQVL), 96 to 116 (VLLLLVFMVAGIYFMKQLLLF), 131 to 165 (VSLMFCLASAFLSAFLDALTVIAVIIAVAVGFYSI), 254 to 274 (VPVLISGILTCYLVEKFGIFG), 316 to 336 (LIAGLALHLASVGLIGLSVII), 364 to 384 (LAVFFAVVGVIIDQHLFAPVI), 396 to 416 (LVIFYIANGLLSMVSDNVFVG), 454 to 474 (ATPNGQAAFLFLLTSALAPLI), and 481 to 501 (MVWMALPYTIVLSIVGVMAIQ).

Belongs to the NhaB Na(+)/H(+) (TC 2.A.34) antiporter family.

The protein localises to the cell inner membrane. It catalyses the reaction 2 Na(+)(in) + 3 H(+)(out) = 2 Na(+)(out) + 3 H(+)(in). Na(+)/H(+) antiporter that extrudes sodium in exchange for external protons. This chain is Na(+)/H(+) antiporter NhaB, found in Shewanella baltica (strain OS195).